The chain runs to 205 residues: GTP cyclohydrolase-2 (205 aa).

49-53 lines the GTP pocket; that stretch reads RIHSE. The Zn(2+) site is built by cysteine 54, cysteine 65, and cysteine 67. Residues glutamine 70, 92–94, and threonine 114 each bind GTP; that span reads EGR. The active-site Proton acceptor is the aspartate 126. Arginine 128 functions as the Nucleophile in the catalytic mechanism. Positions 149 and 154 each coordinate GTP.

Belongs to the GTP cyclohydrolase II family. Requires Zn(2+) as cofactor.

It carries out the reaction GTP + 4 H2O = 2,5-diamino-6-hydroxy-4-(5-phosphoribosylamino)-pyrimidine + formate + 2 phosphate + 3 H(+). Its pathway is cofactor biosynthesis; riboflavin biosynthesis; 5-amino-6-(D-ribitylamino)uracil from GTP: step 1/4. Functionally, catalyzes the conversion of GTP to 2,5-diamino-6-ribosylamino-4(3H)-pyrimidinone 5'-phosphate (DARP), formate and pyrophosphate. This chain is GTP cyclohydrolase-2, found in Shewanella amazonensis (strain ATCC BAA-1098 / SB2B).